Consider the following 235-residue polypeptide: Phosphoribosylaminoimidazole-succinocarboxamide synthase (235 aa).

Belongs to the SAICAR synthetase family.

The enzyme catalyses 5-amino-1-(5-phospho-D-ribosyl)imidazole-4-carboxylate + L-aspartate + ATP = (2S)-2-[5-amino-1-(5-phospho-beta-D-ribosyl)imidazole-4-carboxamido]succinate + ADP + phosphate + 2 H(+). Its pathway is purine metabolism; IMP biosynthesis via de novo pathway; 5-amino-1-(5-phospho-D-ribosyl)imidazole-4-carboxamide from 5-amino-1-(5-phospho-D-ribosyl)imidazole-4-carboxylate: step 1/2. The protein is Phosphoribosylaminoimidazole-succinocarboxamide synthase of Clostridium kluyveri (strain NBRC 12016).